We begin with the raw amino-acid sequence, 197 residues long: Thymidine kinase (197 aa).

Residues 9–16 and 87–90 each bind ATP; these read SAMDAGKT and DEIH. E88 (proton acceptor) is an active-site residue. 4 residues coordinate Zn(2+): C145, C147, C187, and H190.

It belongs to the thymidine kinase family. In terms of assembly, homotetramer.

The protein localises to the cytoplasm. It carries out the reaction thymidine + ATP = dTMP + ADP + H(+). This chain is Thymidine kinase, found in Francisella tularensis subsp. tularensis (strain SCHU S4 / Schu 4).